The primary structure comprises 244 residues: Robin (244 aa).

The protein is Robin of Acanthamoeba polyphaga (Amoeba).